Reading from the N-terminus, the 376-residue chain is Chaperone protein DnaJ (376 aa).

Residues 4 to 68 form the J domain; sequence DYYDILGVDR…DTRSRYDQFG (65 aa). A CR-type zinc finger spans residues 135 to 217; it reads GGEKEIRIPH…CNGAGRRQVT (83 aa). C148, C151, C165, C168, C191, C194, C205, and C208 together coordinate Zn(2+). 4 CXXCXGXG motif repeats span residues 148–155, 165–172, 191–198, and 205–212; these read CQVCKGDG, CSTCNGQG, CPACNGQG, and CEVCNGAG.

Belongs to the DnaJ family. Homodimer. Requires Zn(2+) as cofactor.

Its subcellular location is the cytoplasm. Functionally, participates actively in the response to hyperosmotic and heat shock by preventing the aggregation of stress-denatured proteins and by disaggregating proteins, also in an autonomous, DnaK-independent fashion. Unfolded proteins bind initially to DnaJ; upon interaction with the DnaJ-bound protein, DnaK hydrolyzes its bound ATP, resulting in the formation of a stable complex. GrpE releases ADP from DnaK; ATP binding to DnaK triggers the release of the substrate protein, thus completing the reaction cycle. Several rounds of ATP-dependent interactions between DnaJ, DnaK and GrpE are required for fully efficient folding. Also involved, together with DnaK and GrpE, in the DNA replication of plasmids through activation of initiation proteins. This Crocosphaera subtropica (strain ATCC 51142 / BH68) (Cyanothece sp. (strain ATCC 51142)) protein is Chaperone protein DnaJ.